The following is a 358-amino-acid chain: Methylthioribose-1-phosphate isomerase (358 aa).

Residues 54 to 56 (RGA), arginine 96, and glutamine 205 each bind substrate. The Proton donor role is filled by aspartate 246. Substrate is bound at residue 256 to 257 (GK).

It belongs to the eIF-2B alpha/beta/delta subunits family. MtnA subfamily.

It carries out the reaction 5-(methylsulfanyl)-alpha-D-ribose 1-phosphate = 5-(methylsulfanyl)-D-ribulose 1-phosphate. Its pathway is amino-acid biosynthesis; L-methionine biosynthesis via salvage pathway; L-methionine from S-methyl-5-thio-alpha-D-ribose 1-phosphate: step 1/6. Functionally, catalyzes the interconversion of methylthioribose-1-phosphate (MTR-1-P) into methylthioribulose-1-phosphate (MTRu-1-P). The chain is Methylthioribose-1-phosphate isomerase from Pseudomonas putida (strain ATCC 47054 / DSM 6125 / CFBP 8728 / NCIMB 11950 / KT2440).